Consider the following 187-residue polypeptide: MIDRNGYRANVGIILLNSQNQVFWGKRARQDSWQFPQGGIKSGETPTEAMYRELAEETGLQPVHVEILGRTREWLRYDVPACWTRRDWRKNYRGQKQIWFLLRLLGRDSDVSLETCAHPEFDAWRWNQYWVELESVVEFKRQVYRQALTELSRLLDHEAGLGNDRAYREPLEPVEKNRKKSSDTRQS.

Residues 6 to 149 form the Nudix hydrolase domain; it reads GYRANVGIIL…KRQVYRQALT (144 aa). The short motif at 38-59 is the Nudix box element; it reads GGIKSGETPTEAMYRELAEETG. Positions 166 to 187 are disordered; it reads AYREPLEPVEKNRKKSSDTRQS.

This sequence belongs to the Nudix hydrolase family. RppH subfamily. A divalent metal cation is required as a cofactor.

Functionally, accelerates the degradation of transcripts by removing pyrophosphate from the 5'-end of triphosphorylated RNA, leading to a more labile monophosphorylated state that can stimulate subsequent ribonuclease cleavage. This Nitrosomonas europaea (strain ATCC 19718 / CIP 103999 / KCTC 2705 / NBRC 14298) protein is RNA pyrophosphohydrolase.